The primary structure comprises 92 residues: Neuropeptide ShK-like2 (92 aa).

The first 23 residues, Met-1–Ala-23, serve as a signal peptide directing secretion. Residues Arg-24–Arg-51 constitute a propeptide that is removed on maturation. 3 disulfides stabilise this stretch: Cys-53–Cys-92, Cys-61–Cys-85, and Cys-70–Cys-89.

As to expression, transcripts are first expressed mostly in the endoderm (with rare ectodermal cells) in the late planulae. They are mostly expressed in endodermal ganglion cells in the body column and tentacles in primary polyps, as well as in a small number of ectodermal sensory neurons in tentacles and body wall. They are not expressed in nematocytes. Transcripts are predominantly expressed in ectodermal sensory neurons in early and late planulae. They are expressed in endodermal ganglion cells in the body column and tentacles in primary polyps, as well as in a small number of ectodermal neurons in pharynx. They are not expressed in nematocytes.

In vivo, this neuropeptide induces contraction paralysis followed by death (within 2 hours) on 4 zebrafish larvae on the 15 tested. Also induces body contraction in Nematostella 11-dpf polyps. The protein is Neuropeptide ShK-like2 of Nematostella vectensis (Starlet sea anemone).